Consider the following 319-residue polypeptide: Acetyl-coenzyme A carboxylase carboxyl transferase subunit alpha (319 aa).

Residues 32–293 enclose the CoA carboxyltransferase C-terminal domain; the sequence is NIQEEISRLQ…HTALAEALQT (262 aa).

It belongs to the AccA family. In terms of assembly, acetyl-CoA carboxylase is a heterohexamer composed of biotin carboxyl carrier protein (AccB), biotin carboxylase (AccC) and two subunits each of ACCase subunit alpha (AccA) and ACCase subunit beta (AccD).

Its subcellular location is the cytoplasm. The catalysed reaction is N(6)-carboxybiotinyl-L-lysyl-[protein] + acetyl-CoA = N(6)-biotinyl-L-lysyl-[protein] + malonyl-CoA. The protein operates within lipid metabolism; malonyl-CoA biosynthesis; malonyl-CoA from acetyl-CoA: step 1/1. In terms of biological role, component of the acetyl coenzyme A carboxylase (ACC) complex. First, biotin carboxylase catalyzes the carboxylation of biotin on its carrier protein (BCCP) and then the CO(2) group is transferred by the carboxyltransferase to acetyl-CoA to form malonyl-CoA. The polypeptide is Acetyl-coenzyme A carboxylase carboxyl transferase subunit alpha (Thioalkalivibrio sulfidiphilus (strain HL-EbGR7)).